Here is a 118-residue protein sequence, read N- to C-terminus: Large ribosomal subunit protein bL20 (118 aa).

This sequence belongs to the bacterial ribosomal protein bL20 family.

Its function is as follows. Binds directly to 23S ribosomal RNA and is necessary for the in vitro assembly process of the 50S ribosomal subunit. It is not involved in the protein synthesizing functions of that subunit. The protein is Large ribosomal subunit protein bL20 of Edwardsiella ictaluri (strain 93-146).